The chain runs to 151 residues: Aspartate 1-decarboxylase (151 aa).

The active-site Schiff-base intermediate with substrate; via pyruvic acid is serine 26. The residue at position 26 (serine 26) is a Pyruvic acid (Ser). Threonine 58 contacts substrate. Tyrosine 59 functions as the Proton donor in the catalytic mechanism. Residue 74-76 participates in substrate binding; that stretch reads GGA.

It belongs to the PanD family. As to quaternary structure, heterooctamer of four alpha and four beta subunits. Requires pyruvate as cofactor. Post-translationally, is synthesized initially as an inactive proenzyme, which is activated by self-cleavage at a specific serine bond to produce a beta-subunit with a hydroxyl group at its C-terminus and an alpha-subunit with a pyruvoyl group at its N-terminus.

Its subcellular location is the cytoplasm. It carries out the reaction L-aspartate + H(+) = beta-alanine + CO2. Its pathway is cofactor biosynthesis; (R)-pantothenate biosynthesis; beta-alanine from L-aspartate: step 1/1. Its function is as follows. Catalyzes the pyruvoyl-dependent decarboxylation of aspartate to produce beta-alanine. The polypeptide is Aspartate 1-decarboxylase (Crocosphaera subtropica (strain ATCC 51142 / BH68) (Cyanothece sp. (strain ATCC 51142))).